A 103-amino-acid polypeptide reads, in one-letter code: UPF0145 protein PERMA_0324 (103 aa).

The protein belongs to the UPF0145 family.

In Persephonella marina (strain DSM 14350 / EX-H1), this protein is UPF0145 protein PERMA_0324.